The primary structure comprises 615 residues: 1-deoxy-D-xylulose-5-phosphate synthase (615 aa).

Residues His-72 and 113-115 (GHA) contribute to the thiamine diphosphate site. Residue Asp-144 coordinates Mg(2+). Residues 145–146 (GA), Asn-173, Tyr-281, and Glu-360 each bind thiamine diphosphate. Residue Asn-173 coordinates Mg(2+).

The protein belongs to the transketolase family. DXPS subfamily. In terms of assembly, homodimer. The cofactor is Mg(2+). It depends on thiamine diphosphate as a cofactor.

The enzyme catalyses D-glyceraldehyde 3-phosphate + pyruvate + H(+) = 1-deoxy-D-xylulose 5-phosphate + CO2. It functions in the pathway metabolic intermediate biosynthesis; 1-deoxy-D-xylulose 5-phosphate biosynthesis; 1-deoxy-D-xylulose 5-phosphate from D-glyceraldehyde 3-phosphate and pyruvate: step 1/1. Functionally, catalyzes the acyloin condensation reaction between C atoms 2 and 3 of pyruvate and glyceraldehyde 3-phosphate to yield 1-deoxy-D-xylulose-5-phosphate (DXP). This is 1-deoxy-D-xylulose-5-phosphate synthase from Thermus thermophilus (strain ATCC 27634 / DSM 579 / HB8).